The primary structure comprises 390 residues: Chorismate synthase (390 aa).

Arg-40 and Arg-46 together coordinate NADP(+). FMN contacts are provided by residues 128-130 (RAS), 251-252 (QA), Gly-296, 311-315 (KPIPT), and Arg-339.

The protein belongs to the chorismate synthase family. Homotetramer. FMNH2 serves as cofactor.

The enzyme catalyses 5-O-(1-carboxyvinyl)-3-phosphoshikimate = chorismate + phosphate. The protein operates within metabolic intermediate biosynthesis; chorismate biosynthesis; chorismate from D-erythrose 4-phosphate and phosphoenolpyruvate: step 7/7. In terms of biological role, catalyzes the anti-1,4-elimination of the C-3 phosphate and the C-6 proR hydrogen from 5-enolpyruvylshikimate-3-phosphate (EPSP) to yield chorismate, which is the branch point compound that serves as the starting substrate for the three terminal pathways of aromatic amino acid biosynthesis. This reaction introduces a second double bond into the aromatic ring system. This chain is Chorismate synthase, found in Sulfurihydrogenibium sp. (strain YO3AOP1).